A 194-amino-acid polypeptide reads, in one-letter code: NADH-quinone oxidoreductase subunit B (194 aa).

Over residues 1-11 the composition is skewed to pro residues; the sequence is MGVIATPPPSV. Positions 1–24 are disordered; sequence MGVIATPPPSVQGPSSQVPSSAPI. The span at 12-21 shows a compositional bias: low complexity; that stretch reads QGPSSQVPSS. Cys-72, Cys-73, Cys-137, and Cys-167 together coordinate [4Fe-4S] cluster.

Belongs to the complex I 20 kDa subunit family. In terms of assembly, NDH-1 is composed of 14 different subunits. Subunits NuoB, C, D, E, F, and G constitute the peripheral sector of the complex. It depends on [4Fe-4S] cluster as a cofactor.

It localises to the cell inner membrane. The enzyme catalyses a quinone + NADH + 5 H(+)(in) = a quinol + NAD(+) + 4 H(+)(out). Its function is as follows. NDH-1 shuttles electrons from NADH, via FMN and iron-sulfur (Fe-S) centers, to quinones in the respiratory chain. The immediate electron acceptor for the enzyme in this species is believed to be ubiquinone. Couples the redox reaction to proton translocation (for every two electrons transferred, four hydrogen ions are translocated across the cytoplasmic membrane), and thus conserves the redox energy in a proton gradient. The chain is NADH-quinone oxidoreductase subunit B from Rhodospirillum centenum (strain ATCC 51521 / SW).